The following is a 382-amino-acid chain: Serine/arginine-rich splicing factor SR45a (382 aa).

4 stretches are compositionally biased toward low complexity: residues 30-45, 54-68, 177-195, and 202-219; these read PMSYSRRSRYSPSLSP, VSRSLSRSPTRSVSS, PSYSPRRSVSCSRSRSRSY, and SYSPSYGRRGRSSSYSPF. Disordered regions lie at residues 30–76 and 150–382; these read PMSY…PGNS and KARR…SVSP. Positions 288–316 are enriched in basic and acidic residues; sequence RARDRSCSPYYRGRDRSYSPHYQGRDRSY. Low complexity predominate over residues 329–343; it reads VSGSVSPGGRSMSRS. A compositionally biased stretch (basic residues) spans 345 to 361; the sequence is SPRKGRKESRSKSRRHD. The segment covering 364–382 has biased composition (low complexity); it reads SSMCHSRSARSSTSRSVSP.

The protein belongs to the splicing factor SR family. SR45 subfamily. As to quaternary structure, component of the spliceosome. Homodimer. Interacts with PRP38, SCL28, SR45, RNU1 and U2AF35B. Phosphorylated. Expressed in leaves, stems and roots.

It localises to the nucleus speckle. In terms of biological role, probable splicing factor involved in constitutive and/or alternative splicing events. May bridge the 5' and 3' components of the spliceosome. This chain is Serine/arginine-rich splicing factor SR45a (SR45A), found in Arabidopsis thaliana (Mouse-ear cress).